The chain runs to 298 residues: DNA-3-methyladenine glycosylase (298 aa).

The transit peptide at 1-17 (MVTPALQMKKPKQFCRR) directs the protein to the mitochondrion. The tract at residues 1–65 (MVTPALQMKK…CPRERCLGPP (65 aa)) is disordered. Residues 9 to 25 (KKPKQFCRRMGQKKQRP) show a composition bias toward basic residues. A phosphoserine mark is found at S78 and S252.

This sequence belongs to the DNA glycosylase MPG family. Binds MBD1. Binds SSBP1.

Its subcellular location is the cytoplasm. It localises to the mitochondrion matrix. The protein localises to the mitochondrion nucleoid. It is found in the nucleus. It catalyses the reaction Hydrolysis of alkylated DNA, releasing 3-methyladenine, 3-methylguanine, 7-methylguanine and 7-methyladenine.. Its activity is regulated as follows. Binding to SSBP1 in mitochondria inhibits glycosylase activity in the context of a single-stranded DNA (ssDNA), but not a double-stranded DNA (dsDNA) substrates. Functionally, hydrolysis of the deoxyribose N-glycosidic bond to excise 3-methyladenine, and 7-methylguanine from the damaged DNA polymer formed by alkylation lesions. The chain is DNA-3-methyladenine glycosylase (MPG) from Homo sapiens (Human).